Reading from the N-terminus, the 207-residue chain is Putative 3-methyladenine DNA glycosylase (207 aa).

Residues proline 182–proline 193 show a composition bias toward low complexity. The segment at proline 182–proline 207 is disordered. Over residues arginine 198–proline 207 the composition is skewed to basic residues.

This sequence belongs to the DNA glycosylase MPG family.

The protein is Putative 3-methyladenine DNA glycosylase of Anaeromyxobacter dehalogenans (strain 2CP-C).